A 199-amino-acid polypeptide reads, in one-letter code: dITP/XTP pyrophosphatase (199 aa).

7–12 (TTNLHK) serves as a coordination point for substrate. 2 residues coordinate Mg(2+): Glu-41 and Asp-70. Asp-70 serves as the catalytic Proton acceptor. Substrate contacts are provided by residues Ser-71, 154-157 (FGYD), Lys-177, and 182-183 (HR).

It belongs to the HAM1 NTPase family. Homodimer. Requires Mg(2+) as cofactor.

It catalyses the reaction XTP + H2O = XMP + diphosphate + H(+). The catalysed reaction is dITP + H2O = dIMP + diphosphate + H(+). The enzyme catalyses ITP + H2O = IMP + diphosphate + H(+). Functionally, pyrophosphatase that catalyzes the hydrolysis of nucleoside triphosphates to their monophosphate derivatives, with a high preference for the non-canonical purine nucleotides XTP (xanthosine triphosphate), dITP (deoxyinosine triphosphate) and ITP. Seems to function as a house-cleaning enzyme that removes non-canonical purine nucleotides from the nucleotide pool, thus preventing their incorporation into DNA/RNA and avoiding chromosomal lesions. The sequence is that of dITP/XTP pyrophosphatase from Protochlamydia amoebophila (strain UWE25).